The primary structure comprises 217 residues: 3,4-dihydroxy-2-butanone 4-phosphate synthase (217 aa).

D-ribulose 5-phosphate-binding positions include 37–38, Asp42, 150–154, and Glu174; these read RE and RRGHT. Glu38 serves as a coordination point for Mg(2+). Residue His153 participates in Mg(2+) binding.

Belongs to the DHBP synthase family. As to quaternary structure, homodimer. Requires Mg(2+) as cofactor. Mn(2+) is required as a cofactor.

The catalysed reaction is D-ribulose 5-phosphate = (2S)-2-hydroxy-3-oxobutyl phosphate + formate + H(+). Its pathway is cofactor biosynthesis; riboflavin biosynthesis; 2-hydroxy-3-oxobutyl phosphate from D-ribulose 5-phosphate: step 1/1. In terms of biological role, catalyzes the conversion of D-ribulose 5-phosphate to formate and 3,4-dihydroxy-2-butanone 4-phosphate. This Yersinia enterocolitica serotype O:8 / biotype 1B (strain NCTC 13174 / 8081) protein is 3,4-dihydroxy-2-butanone 4-phosphate synthase.